Here is a 247-residue protein sequence, read N- to C-terminus: Protein SODIUM POTASSIUM ROOT DEFECTIVE 3 (247 aa).

The tract at residues 130–166 is disordered; it reads GSTGQDTVATEESEASAPKRGSSGPVEEKKKSSGSGS. Residues 167–235 enclose the HMA domain; that stretch reads DQVVVLRVSL…KVKNAQFWTP (69 aa). A metal cation contacts are provided by Cys180 and Cys183.

The protein resides in the cytoplasm. Functionally, heavy metal-associated protein involved in salt tolerance. The polypeptide is Protein SODIUM POTASSIUM ROOT DEFECTIVE 3 (Arabidopsis thaliana (Mouse-ear cress)).